Here is a 151-residue protein sequence, read N- to C-terminus: Deoxyuridine 5'-triphosphate nucleotidohydrolase (151 aa).

Substrate-binding positions include 70–72, N83, 87–89, and M97; these read RSG and LID.

Belongs to the dUTPase family. Homotrimer. Requires Mg(2+) as cofactor.

It catalyses the reaction dUTP + H2O = dUMP + diphosphate + H(+). It participates in pyrimidine metabolism; dUMP biosynthesis; dUMP from dCTP (dUTP route): step 2/2. Functionally, this enzyme is involved in nucleotide metabolism: it produces dUMP, the immediate precursor of thymidine nucleotides and it decreases the intracellular concentration of dUTP so that uracil cannot be incorporated into DNA. The polypeptide is Deoxyuridine 5'-triphosphate nucleotidohydrolase (Escherichia coli (strain K12 / MC4100 / BW2952)).